The following is a 191-amino-acid chain: Ribonuclease HII (191 aa).

One can recognise an RNase H type-2 domain in the interval 16 to 191 (INLIGIDEAG…KLHRKSFKLL (176 aa)). A divalent metal cation is bound by residues Asp22, Glu23, and Asp110.

The protein belongs to the RNase HII family. The cofactor is Mn(2+). Requires Mg(2+) as cofactor.

It localises to the cytoplasm. The enzyme catalyses Endonucleolytic cleavage to 5'-phosphomonoester.. Functionally, endonuclease that specifically degrades the RNA of RNA-DNA hybrids. This is Ribonuclease HII from Campylobacter jejuni subsp. jejuni serotype O:6 (strain 81116 / NCTC 11828).